Reading from the N-terminus, the 510-residue chain is NAD(P)H-quinone oxidoreductase subunit 2 A, chloroplastic (510 aa).

Transmembrane regions (helical) follow at residues 24 to 44 (LLLF…GLIL), 59 to 79 (WFYF…LFRW), 99 to 119 (IFQF…VEYI), 124 to 144 (MAIT…MFLC), 149 to 169 (LITI…LSGY), 183 to 203 (YLLM…WLYG), 229 to 249 (ISIA…PAPF), 295 to 315 (WHLL…LIAI), 323 to 343 (MLAY…IVGD), 347 to 367 (GYAS…GTFA), 395 to 415 (ALSS…AGFF), 418 to 438 (LHLF…IGLL), and 484 to 504 (MIVC…IIAI).

It belongs to the complex I subunit 2 family. NDH is composed of at least 16 different subunits, 5 of which are encoded in the nucleus.

The protein localises to the plastid. It is found in the chloroplast thylakoid membrane. It catalyses the reaction a plastoquinone + NADH + (n+1) H(+)(in) = a plastoquinol + NAD(+) + n H(+)(out). The enzyme catalyses a plastoquinone + NADPH + (n+1) H(+)(in) = a plastoquinol + NADP(+) + n H(+)(out). Functionally, NDH shuttles electrons from NAD(P)H:plastoquinone, via FMN and iron-sulfur (Fe-S) centers, to quinones in the photosynthetic chain and possibly in a chloroplast respiratory chain. The immediate electron acceptor for the enzyme in this species is believed to be plastoquinone. Couples the redox reaction to proton translocation, and thus conserves the redox energy in a proton gradient. The sequence is that of NAD(P)H-quinone oxidoreductase subunit 2 A, chloroplastic from Amborella trichopoda.